The following is a 356-amino-acid chain: Cyclin-D4-1 (356 aa).

The protein belongs to the cyclin family. Cyclin D subfamily.

The protein is Cyclin-D4-1 (CYCD4-1) of Oryza sativa subsp. japonica (Rice).